Reading from the N-terminus, the 440-residue chain is Protein translocase subunit SecY (440 aa).

10 helical membrane passes run Ile-17–Gly-37, Ile-74–Val-94, Tyr-116–Leu-135, Phe-155–Met-175, Leu-178–Thr-198, Gly-213–Val-233, Val-270–Val-290, Trp-316–Val-336, Leu-374–Asp-394, and Gly-403–Val-423.

Belongs to the SecY/SEC61-alpha family. As to quaternary structure, component of the Sec protein translocase complex. Heterotrimer consisting of SecY, SecE and SecG subunits. The heterotrimers can form oligomers, although 1 heterotrimer is thought to be able to translocate proteins. Interacts with the ribosome. Interacts with SecDF, and other proteins may be involved. Interacts with SecA.

It is found in the cell membrane. The central subunit of the protein translocation channel SecYEG. Consists of two halves formed by TMs 1-5 and 6-10. These two domains form a lateral gate at the front which open onto the bilayer between TMs 2 and 7, and are clamped together by SecE at the back. The channel is closed by both a pore ring composed of hydrophobic SecY resides and a short helix (helix 2A) on the extracellular side of the membrane which forms a plug. The plug probably moves laterally to allow the channel to open. The ring and the pore may move independently. The sequence is that of Protein translocase subunit SecY from Corynebacterium glutamicum (strain ATCC 13032 / DSM 20300 / JCM 1318 / BCRC 11384 / CCUG 27702 / LMG 3730 / NBRC 12168 / NCIMB 10025 / NRRL B-2784 / 534).